A 345-amino-acid chain; its full sequence is Short-wave-sensitive opsin 1 (345 aa).

The Extracellular portion of the chain corresponds to Met1–Ala30. The N-linked (GlcNAc...) asparagine glycan is linked to Asn11. The chain crosses the membrane as a helical span at residues Phe31–Ala55. At Thr56–Asn67 the chain is on the cytoplasmic side. Residues Tyr68–Cys93 form a helical membrane-spanning segment. The Extracellular segment spans residues Asn94–Glu107. Cys104 and Cys181 are disulfide-bonded. Residues Gly108–Phe127 traverse the membrane as a helical segment. Topologically, residues Glu128–His146 are cytoplasmic. Residues Ala147–Ser170 form a helical membrane-spanning segment. Residues Arg171–Ser196 lie on the Extracellular side of the membrane. A helical membrane pass occupies residues Tyr197–Leu224. Over Lys225–Arg246 the chain is Cytoplasmic. Residues Met247–Val270 traverse the membrane as a helical segment. The Extracellular segment spans residues Asn271–Asp278. Residues Leu279–Met303 traverse the membrane as a helical segment. Lys290 is modified (N6-(retinylidene)lysine). Residues Asn304–Asn345 are Cytoplasmic-facing.

The protein belongs to the G-protein coupled receptor 1 family. Opsin subfamily. Post-translationally, phosphorylated on some or all of the serine and threonine residues present in the C-terminal region. As to expression, the three color pigments are found in the cone photoreceptor cells. Expressed throughout the epidermis and dermis, primarily in the stratum granulosum in the facial and abdominal skin (at protein level). Expressed in dermal fibroblasts (at protein level). Expressed in melanocytes (at protein level).

It is found in the cell membrane. It localises to the photoreceptor inner segment. The protein resides in the cell projection. The protein localises to the cilium. Its subcellular location is the photoreceptor outer segment. It is found in the cytoplasm. It localises to the perinuclear region. In terms of biological role, visual pigments are the light-absorbing molecules that mediate vision. They consist of an apoprotein, opsin, covalently linked to cis-retinal. Required for the maintenance of cone outer segment organization in the ventral retina, but not essential for the maintenance of functioning cone photoreceptors. Involved in ensuring correct abundance and localization of retinal membrane proteins. May increase spectral sensitivity in dim light. This Homo sapiens (Human) protein is Short-wave-sensitive opsin 1 (OPN1SW).